The following is a 136-amino-acid chain: Ribosome-binding factor A (136 aa).

The protein belongs to the RbfA family. In terms of assembly, monomer. Binds 30S ribosomal subunits, but not 50S ribosomal subunits or 70S ribosomes.

It is found in the cytoplasm. Functionally, one of several proteins that assist in the late maturation steps of the functional core of the 30S ribosomal subunit. Associates with free 30S ribosomal subunits (but not with 30S subunits that are part of 70S ribosomes or polysomes). Required for efficient processing of 16S rRNA. May interact with the 5'-terminal helix region of 16S rRNA. In Serratia proteamaculans (strain 568), this protein is Ribosome-binding factor A.